We begin with the raw amino-acid sequence, 252 residues long: 7-cyano-7-deazaguanine synthase (252 aa).

22–32 contributes to the ATP binding site; the sequence is FSGGQDSTTCL. Zn(2+) contacts are provided by Cys-215, Cys-230, Cys-233, and Cys-236.

It belongs to the QueC family. The cofactor is Zn(2+).

It carries out the reaction 7-carboxy-7-deazaguanine + NH4(+) + ATP = 7-cyano-7-deazaguanine + ADP + phosphate + H2O + H(+). Its pathway is purine metabolism; 7-cyano-7-deazaguanine biosynthesis. Catalyzes the ATP-dependent conversion of 7-carboxy-7-deazaguanine (CDG) to 7-cyano-7-deazaguanine (preQ(0)). The sequence is that of 7-cyano-7-deazaguanine synthase from Granulibacter bethesdensis (strain ATCC BAA-1260 / CGDNIH1).